The primary structure comprises 442 residues: Vacuolar zinc transporter ZRC1 (442 aa).

The Cytoplasmic segment spans residues 1-8 (MITGKELR). A helical membrane pass occupies residues 9 to 29 (IISLLTLDTVFFLLEITIGYM). At 30–32 (SHS) the chain is on the vacuolar side. Residues 33 to 53 (LALIADSFHMLNDIISLLVAL) form a helical membrane-spanning segment. The Cytoplasmic segment spans residues 54-75 (WAVDVAKNRGPDAKYTYGWKRA). A helical transmembrane segment spans residues 76 to 96 (EILGALINAVFLIALCFSIMI). At 97–112 (EALQRLIEPQEIQNPR) the chain is on the vacuolar side. Residues 113-133 (LVLYVGVAGLISNVVGLFLFH) form a helical membrane-spanning segment. Over 134–235 (DHGSDSLHSH…GHRSLNMHGV (102 aa)) the chain is Cytoplasmic. 3 short sequence motifs (histidine repeat) span residues 141–145 (HSHSH), 163–167 (HSHSH), and 216–220 (HDHSH). Disordered stretches follow at residues 141 to 170 (HSHSHGSVESGNNDLDIESNATHSHSHASL) and 208 to 227 (QPLLNHDDHDHSHESKKPGH). A compositionally biased stretch (polar residues) spans 149–170 (ESGNNDLDIESNATHSHSHASL). The segment covering 212–224 (NHDDHDHSHESKK) has biased composition (basic and acidic residues). The helical transmembrane segment at 236–256 (FLHVLGDALGNIGVIAAALFI) threads the bilayer. Residues 257–265 (WKTEYSWRY) are Vacuolar-facing. Residues 266–286 (YSDPIVSLIITIIIFSSALPL) form a helical membrane-spanning segment. The Cytoplasmic portion of the chain corresponds to 287-442 (SRRASRILLQ…AVNCNTSNCL (156 aa)). Lys-357 is covalently cross-linked (Glycyl lysine isopeptide (Lys-Gly) (interchain with G-Cter in ubiquitin)). 3 positions are modified to phosphoserine: Ser-387, Ser-393, and Ser-397. The segment at 391-419 (GGSPSSSQEAFDSHGNTEHGRKKRSPTAY) is disordered.

It belongs to the cation diffusion facilitator (CDF) transporter (TC 2.A.4) family. SLC30A subfamily.

Its subcellular location is the vacuole membrane. The catalysed reaction is Zn(2+)(in) = Zn(2+)(out). Vacuolar transporter that regulates zinc homeostasis by mediating zinc transport and storage into the vacuole. ZRC1 senses zinc availability in the cytosol, which might be performed through the histidine repeat motifs, and transports zinc from the cytosol to the vacuole if zinc in cytosol is abundant, conferring resistance to zinc toxicity. Plays a role in resistance to zinc shock resulting from sudden influx of zinc into cytoplasm when ZRT1 and ZRT2 are induced in response to zinc depletion. The protein is Vacuolar zinc transporter ZRC1 of Saccharomyces cerevisiae (strain ATCC 204508 / S288c) (Baker's yeast).